The following is a 387-amino-acid chain: Dual specificity protein phosphatase MPK-4 (387 aa).

Polar residues predominate over residues 1-15 (MEQSQSQRQAWPSSS). The interval 1 to 27 (MEQSQSQRQAWPSSSAGGGKAQDSGVL) is disordered. Residues 35–182 (GPVSIDEVDT…LKLFRRMGCK (148 aa)) enclose the Tyrosine-protein phosphatase domain. The active-site Phosphocysteine intermediate is the Cys126. Residues 248–267 (LEHKPRDRPPQEVVPKEKEE) form a disordered region.

The protein belongs to the protein-tyrosine phosphatase family. Non-receptor class dual specificity subfamily. Interacts (via tyrosine-protein phosphatase domain) with bsk/JNK; the interaction dephosphorylates bsk.

It is found in the nucleus. The protein localises to the cytoplasm. The catalysed reaction is O-phospho-L-tyrosyl-[protein] + H2O = L-tyrosyl-[protein] + phosphate. The enzyme catalyses O-phospho-L-seryl-[protein] + H2O = L-seryl-[protein] + phosphate. It carries out the reaction O-phospho-L-threonyl-[protein] + H2O = L-threonyl-[protein] + phosphate. With respect to regulation, inhibited by the tyrosine phosphatase inhibitor sodium vanadate. Its function is as follows. Dual specificity phosphatase; can dephosphorylate both phosphotyrosine and phosphoserine or phosphothreonine residues. May suppress bsk/JNK activation during the immune response. This Drosophila melanogaster (Fruit fly) protein is Dual specificity protein phosphatase MPK-4.